The chain runs to 627 residues: MSYQYSQEAKERISKLGQSEIVNFINEISPTLRRKAFGCLPKVPGFRAGHPTEIKEKQKRLIGYMFQSHPSSEERKAWKSFSLFWQFWAEEKIDKSFSMIDNLGLKENSGSIFIRELAKNFPKVARENIERLFIFSGFADDPDVINAFNLFPPAVVLARDIVVDTLPIRLDELEARISLIADNVEKKNNHIKELELKIDAFSERFDNYFNNEKSNLKIINELQSLINSETKQSDIANKSIDELYHFNEKNKQLILSLQEKLDFNALAMNDISEHEKLIKSMANEISELKNALTILCDNKRKNNELDYINELKKLTERIDTLEINTSQASKVSVTNRFTKFHEIAHYENYEYLSSSEDISNRISLNLQAVGLTKNSAETLARLTLATFVSGQIIQFSGSLADIIADAIAIAIGAPRYHIWRVPVGIISDMDSFDFIETIAESSRCLLLKGANLSAFEIYGAAIRDIVVQRQIHPTNYDHLALIATWKQGPATFPDGGMLAELGPVIDTDTLKMRGLSAILPQLKPGCLAKDKWTNIDGLQLDSVDDYVDELRALLDEAGFDGGTLWKRMVHIFYTSLIRVPNGNYIYDLYSVLSFYTLTWAKIKGGPVQKIEDIANRELKNYSAKISS.

Its subcellular location is the cytoplasm. In terms of biological role, component of antiviral defense system Druantia type I, composed of DruA, DruB, DruC, DruD and DruE. Expression of Druantia in E.coli (strain MG1655) confers resistance to phage lambda, SECphi18, SECphi27 and T4. The chain is Druantia protein DruC from Escherichia coli (strain UMEA 4076-1).